A 360-amino-acid chain; its full sequence is Phosphate acyltransferase (360 aa).

Residues 296–305 (STLRREHLDR) show a composition bias toward basic and acidic residues. The interval 296–360 (STLRREHLDR…LRTAEPPGSL (65 aa)) is disordered. Basic residues predominate over residues 314 to 333 (PRQRRRPRRQKRRAACRPRP). Low complexity predominate over residues 334–350 (RSAAGRAPGSGVRGAAG).

The protein belongs to the PlsX family. In terms of assembly, homodimer. Probably interacts with PlsY.

It is found in the cytoplasm. It catalyses the reaction a fatty acyl-[ACP] + phosphate = an acyl phosphate + holo-[ACP]. The protein operates within lipid metabolism; phospholipid metabolism. Catalyzes the reversible formation of acyl-phosphate (acyl-PO(4)) from acyl-[acyl-carrier-protein] (acyl-ACP). This enzyme utilizes acyl-ACP as fatty acyl donor, but not acyl-CoA. The sequence is that of Phosphate acyltransferase from Deinococcus radiodurans (strain ATCC 13939 / DSM 20539 / JCM 16871 / CCUG 27074 / LMG 4051 / NBRC 15346 / NCIMB 9279 / VKM B-1422 / R1).